A 317-amino-acid chain; its full sequence is Sulfate adenylyltransferase subunit 2 (317 aa).

Disordered regions lie at residues 1-21 (MPDSRPDTELSNPQSAKAPLD) and 298-317 (RAIDRDQSGSMEKKKREGYF).

It belongs to the PAPS reductase family. CysD subfamily. As to quaternary structure, heterodimer composed of CysD, the smaller subunit, and CysN.

It carries out the reaction sulfate + ATP + H(+) = adenosine 5'-phosphosulfate + diphosphate. Its pathway is sulfur metabolism; hydrogen sulfide biosynthesis; sulfite from sulfate: step 1/3. In terms of biological role, with CysN forms the ATP sulfurylase (ATPS) that catalyzes the adenylation of sulfate producing adenosine 5'-phosphosulfate (APS) and diphosphate, the first enzymatic step in sulfur assimilation pathway. APS synthesis involves the formation of a high-energy phosphoric-sulfuric acid anhydride bond driven by GTP hydrolysis by CysN coupled to ATP hydrolysis by CysD. This Rhizobium etli (strain ATCC 51251 / DSM 11541 / JCM 21823 / NBRC 15573 / CFN 42) protein is Sulfate adenylyltransferase subunit 2.